We begin with the raw amino-acid sequence, 158 residues long: Peroxidase (158 aa).

A substrate-binding site is contributed by Pro-2. His-32 is a heme b binding site. Thr-33 is a Ca(2+) binding site. A disulfide bridge connects residues Cys-39 and Cys-64. Asn-48 carries an N-linked (GlcNAc...) asparagine glycan. 3 residues coordinate Ca(2+): Asp-78, Thr-81, and Asp-86.

This sequence belongs to the peroxidase family. Classical plant (class III) peroxidase subfamily. Ca(2+) serves as cofactor. The cofactor is heme b.

It catalyses the reaction 2 a phenolic donor + H2O2 = 2 a phenolic radical donor + 2 H2O. Removal of H(2)O(2), oxidation of toxic reductants, biosynthesis and degradation of lignin, suberization, auxin catabolism, response to environmental stresses such as wounding, pathogen attack and oxidative stress. These functions might be dependent on each isozyme/isoform in each plant tissue. The sequence is that of Peroxidase from Lupinus polyphyllus (Large-leaved lupine).